The following is a 246-amino-acid chain: Metallo-beta-lactamase type 2 (246 aa).

The signal sequence occupies residues 1–20; sequence MKKLFVLCVCFFCSITAAGA. Residues histidine 95, histidine 97, aspartate 99, histidine 157, and cysteine 176 each coordinate Zn(2+). Aspartate 99 is an a beta-lactam binding site. The a beta-lactam site is built by lysine 179 and asparagine 185. Histidine 215 lines the Zn(2+) pocket.

Belongs to the metallo-beta-lactamase superfamily. Class-B beta-lactamase family. Monomer. Requires Zn(2+) as cofactor.

The protein localises to the periplasm. It carries out the reaction a beta-lactam + H2O = a substituted beta-amino acid. Its function is as follows. Confers resistance to the different beta-lactam antibiotics (penicillin, cephalosporin and carbapenem) via the hydrolysis of the beta-lactam ring. Exhibits higher catalytic efficiency toward ticarcillin and piperacillin than blaIMP-1. Exhibits catalytic activity for carbapenem compounds, but has a preference for imipenem and ertapenem over meropenem. Has high efficiency for the hydrolysis of cefuroxime. Exhibits hydrolysis of all cephalosporins tested. Exhibits no hydrolysis of temocillin, the 6-alpha-methoxy semisynthetic derivative of ticarcillin. The protein is Metallo-beta-lactamase type 2 of Pseudomonas aeruginosa.